The chain runs to 214 residues: Probable transaldolase (214 aa).

The active-site Schiff-base intermediate with substrate is the lysine 83.

It belongs to the transaldolase family. Type 3B subfamily.

It localises to the cytoplasm. The catalysed reaction is D-sedoheptulose 7-phosphate + D-glyceraldehyde 3-phosphate = D-erythrose 4-phosphate + beta-D-fructose 6-phosphate. Its pathway is carbohydrate degradation; pentose phosphate pathway; D-glyceraldehyde 3-phosphate and beta-D-fructose 6-phosphate from D-ribose 5-phosphate and D-xylulose 5-phosphate (non-oxidative stage): step 2/3. In terms of biological role, transaldolase is important for the balance of metabolites in the pentose-phosphate pathway. The protein is Probable transaldolase of Geotalea uraniireducens (strain Rf4) (Geobacter uraniireducens).